The chain runs to 454 residues: MLDKNTNLTHQSKIEFVNSNLRGIGFVNNTKIEVPYSLPGDVYNVTFFKKKRRKPSAKLELVSQTQRSFIPPCSAFTKCGGCCAQHISYQDQFRYKTSSLLESYKKDFEIVPTLYPAQKTFYYRNRMDFAVFPGPIVGQREAGSFRHIVDLETCLIQSKESNEELYRFRNLISKFPNLPYDRKSDSGFLKYFTLRKAKNTSELMTILTFVEEFKNTIEEKEFENVCLKSLKADHILFCFNRRKGEISATGEIKILKGMDSYKELVCGKEFRVPFDSFFQPNPEGFQPILDFIEKEIPDSFDHLVDLFCGSGFFSRIFAHKFLKITGIDSIESSLEIARKQMSLDFPKIDSSYLKVDLFSKHSSSKLKVLFSSSDKDVLIADPPRAGLGEFVLDALKDSKVSYFFYVSCNPTSQKSDLWKLKDFFQIQKILITDPYPQTPHLESVAFLKRKNFTT.

4 residues coordinate [4Fe-4S] cluster: cysteine 73, cysteine 79, cysteine 82, and cysteine 154. Residues glutamine 279, phenylalanine 307, aspartate 328, and aspartate 381 each contribute to the S-adenosyl-L-methionine site. The Nucleophile role is filled by cysteine 408.

It belongs to the class I-like SAM-binding methyltransferase superfamily. RNA M5U methyltransferase family.

This is an uncharacterized protein from Leptospira interrogans serogroup Icterohaemorrhagiae serovar copenhageni (strain Fiocruz L1-130).